A 407-amino-acid chain; its full sequence is NADH dehydrogenase [ubiquinone] 1 alpha subcomplex subunit 10, mitochondrial (407 aa).

Residues 1–60 constitute a mitochondrion transit peptide; that stretch reads MTAVFRVGLVRLVSRATQSPNLLQAQTNALPAAFQQRCSISGKTMRGGPRVPKAAPYPYK.

This sequence belongs to the complex I NDUFA10 subunit family. In terms of assembly, complex I is composed of 45 different subunits. This a component of the hydrophobic protein fraction. Forms a complex including sicily, ND-42 and Hsp83; the complex is necessary to chaperone ND-42 in the cytoplasm before mitochondrial import; the interaction between sicily and ND-42 is direct and occurs preferably between the unprocessed forms in the cytoplasm. It depends on FAD as a cofactor. As to expression, expressed in muscles (at protein level).

It localises to the mitochondrion matrix. It is found in the cytoplasm. Its function is as follows. Accessory subunit of the mitochondrial membrane respiratory chain NADH dehydrogenase (Complex I), that is believed not to be involved in catalysis. Complex I functions in the transfer of electrons from NADH to the respiratory chain. The immediate electron acceptor for the enzyme is believed to be ubiquinone. The chain is NADH dehydrogenase [ubiquinone] 1 alpha subcomplex subunit 10, mitochondrial from Drosophila melanogaster (Fruit fly).